A 375-amino-acid chain; its full sequence is MNESLKRTPLYELHLKLGARMVPFGGWEMPVQYSSVIEEHRAVREAAGLFDVSHMGEFEVRGPQALDLIQLVSTNDAAKLAVGRVQYALMCYENGTVVDDILIYRLDEHRYWLVVNAGNTQKDWEWINTARERAGLHNLELIDRSAEIALLALQGPKAEEILQPLATGVVLSQLEPFSLAKNVTVSGVPTLVLSRTGYTGEDGFEIYVKAEDVAALWEALLEAGDEQGLLPCGLGARDTLRFEAKLPLYGHEISDQHNPLEAGLGFAVKLKKGVDFIGRDALARIKEQGPTRKLVGIEMIDRGVPRQGYPVAVGGEVVGEVTTGSFSPTLEKNIALAYVPVAHSAVGTEVEVIIRGRALKARVVETPFYRSPHRR.

Belongs to the GcvT family. As to quaternary structure, the glycine cleavage system is composed of four proteins: P, T, L and H.

The catalysed reaction is N(6)-[(R)-S(8)-aminomethyldihydrolipoyl]-L-lysyl-[protein] + (6S)-5,6,7,8-tetrahydrofolate = N(6)-[(R)-dihydrolipoyl]-L-lysyl-[protein] + (6R)-5,10-methylene-5,6,7,8-tetrahydrofolate + NH4(+). In terms of biological role, the glycine cleavage system catalyzes the degradation of glycine. This chain is Aminomethyltransferase, found in Symbiobacterium thermophilum (strain DSM 24528 / JCM 14929 / IAM 14863 / T).